The sequence spans 359 residues: POU domain, class 5, transcription factor 1B (359 aa).

2 disordered regions span residues 1–53 (MAGH…GVGP) and 87–116 (QGGL…EPCT). Residue S111 is modified to Phosphoserine. One can recognise a POU-specific domain in the interval 138 to 212 (DIKALQKELE…LLQKWVEEAD (75 aa)). A DNA-binding region (homeobox) is located at residues 229–288 (ARKRKRTSIENRVRGNLENLFLQCPKPTLQISHIAQQLGLEKDVVRVWFCNRRQKGKRSS). T235 carries the post-translational modification Phosphothreonine. S236, S288, and S289 each carry phosphoserine. The tract at residues 287-322 (SSSDYAQREDFEAAGSPFSGGPVSFPPAPGPHFGTP) is disordered. Residues 299 to 309 (AAGSPFSGGPV) show a composition bias toward low complexity. S354 carries the post-translational modification Phosphoserine.

This sequence belongs to the POU transcription factor family. Class-5 subfamily. In terms of tissue distribution, detected in epithelial cells of the prostate (at protein level). Detected at the mRNA level in several cancer tissues (breast, uterine cervix, lung, thyroid gland, esophagus, colon, urinary bladder, and glioma).

The protein resides in the nucleus. It is found in the cytoplasm. Functionally, shows weak transcriptional activator activity. The sequence is that of POU domain, class 5, transcription factor 1B (POU5F1B) from Homo sapiens (Human).